The primary structure comprises 469 residues: UDP-N-acetylmuramate--L-alanine ligase (469 aa).

113–119 (GSHGKTT) contacts ATP.

Belongs to the MurCDEF family.

Its subcellular location is the cytoplasm. The catalysed reaction is UDP-N-acetyl-alpha-D-muramate + L-alanine + ATP = UDP-N-acetyl-alpha-D-muramoyl-L-alanine + ADP + phosphate + H(+). It functions in the pathway cell wall biogenesis; peptidoglycan biosynthesis. Its function is as follows. Cell wall formation. The polypeptide is UDP-N-acetylmuramate--L-alanine ligase (Sorangium cellulosum (strain So ce56) (Polyangium cellulosum (strain So ce56))).